A 1096-amino-acid polypeptide reads, in one-letter code: DNA-directed RNA polymerase subunit beta (1096 aa).

Belongs to the RNA polymerase beta chain family. As to quaternary structure, in plastids the minimal PEP RNA polymerase catalytic core is composed of four subunits: alpha, beta, beta', and beta''. When a (nuclear-encoded) sigma factor is associated with the core the holoenzyme is formed, which can initiate transcription.

The protein localises to the plastid. It is found in the chloroplast. The enzyme catalyses RNA(n) + a ribonucleoside 5'-triphosphate = RNA(n+1) + diphosphate. Its function is as follows. DNA-dependent RNA polymerase catalyzes the transcription of DNA into RNA using the four ribonucleoside triphosphates as substrates. In Guillardia theta (Cryptophyte), this protein is DNA-directed RNA polymerase subunit beta.